A 168-amino-acid polypeptide reads, in one-letter code: Protein GRIM REAPER (168 aa).

The N-terminal stretch at 1–30 is a signal peptide; that stretch reads MVIKIPNTFIKATSLLSLILYFLIIATSKS. N-linked (GlcNAc...) asparagine glycosylation is present at Asn59.

This sequence belongs to the STIG1 family. In terms of assembly, interacts with PRK5 and to a lower extent with PRK4. Highly expressed in flowers, and at very low levels in leaves.

The protein localises to the secreted. It is found in the extracellular space. The protein resides in the apoplast. Functionally, involved in the regulation of cell death induced by extracellular reactive oxygen species. Only the processed peptide, and not the full length GRI can bind in vivo to the extracellular domain of the receptor PRK5. The GRIp-induced cell death is superoxide and salicylic acid dependent. In Arabidopsis thaliana (Mouse-ear cress), this protein is Protein GRIM REAPER.